A 154-amino-acid polypeptide reads, in one-letter code: Myoglobin (154 aa).

Residues 2–148 (GLSDGEWTLV…FRNDMAAQYK (147 aa)) enclose the Globin domain. Ser4 is modified (phosphoserine). Nitrite is bound at residue His65. His65 serves as a coordination point for O2. Thr68 is subject to Phosphothreonine. His94 contributes to the heme b binding site.

This sequence belongs to the globin family. Monomeric.

The protein resides in the cytoplasm. Its subcellular location is the sarcoplasm. It carries out the reaction Fe(III)-heme b-[protein] + nitric oxide + H2O = Fe(II)-heme b-[protein] + nitrite + 2 H(+). The catalysed reaction is H2O2 + AH2 = A + 2 H2O. Monomeric heme protein which primary function is to store oxygen and facilitate its diffusion within muscle tissues. Reversibly binds oxygen through a pentacoordinated heme iron and enables its timely and efficient release as needed during periods of heightened demand. Depending on the oxidative conditions of tissues and cells, and in addition to its ability to bind oxygen, it also has a nitrite reductase activity whereby it regulates the production of bioactive nitric oxide. Under stress conditions, like hypoxia and anoxia, it also protects cells against reactive oxygen species thanks to its pseudoperoxidase activity. The protein is Myoglobin of Capra hircus (Goat).